A 132-amino-acid polypeptide reads, in one-letter code: Small ribosomal subunit protein uS9 (132 aa).

Belongs to the universal ribosomal protein uS9 family.

The protein is Small ribosomal subunit protein uS9 of Leptospira interrogans serogroup Icterohaemorrhagiae serovar copenhageni (strain Fiocruz L1-130).